Here is a 562-residue protein sequence, read N- to C-terminus: MALSKSMHARNRYKDKPPDFAYLASKYPDFKQHVQINLNGRVSLNFKDPEAVRALTCTLLREDFGLSIDIPLERLIPTVPLRLNYIHWVEDLIGHQDSDKSTLRRGIDIGTGASCIYPLLGATLNGWYFLATEVDDMCFNYAKKNVEQNNLSDLIKVVKVPQKTLLMDALKEESEIIYDFCMCNPPFFANQLEAKGVNSRNPRRPPPSSVNTGGITEIMAEGGELEFVKRIIHDSLQLKKRLRWYSCMLGKKCSLAPLKEELRIQGVPKVTYTEFCQGRTMRWALAWSFYDDVTVPSPPSKRRKLEKPRKPITFVVLASVMKELSLKASPLRSETAEGIVVVTTWIEKILTDLKVQHKRVPCGKEEVSLFLTAIENSWIHLRRKKRERVRQLREVPRAPEDVIQALEEKKPTPKESGNSQELARGPQERTPCGPALREGEAAAVEGPCPSQESLSQEENPEPTEDERSEEKGGVEVLESCQGSSNGAQDQEASEQFGSPVAERGKRLPGVAGQYLFKCLINVKKEVDDALVEMHWVEGQNRDLMNQLCTYIRNQIFRLVAVN.

Positions 17-20 are RNA-binding; that stretch reads PPDF. Residues arginine 82, glycine 110, serine 114, glutamate 133, threonine 164, and asparagine 184 each contribute to the S-adenosyl-L-methionine site. Positions 163–167 are K-loop; the sequence is KTLLM. 3 RNA-binding regions span residues 199–211, 250–254, and 277–283; these read SRNP…SSVN, GKKCS, and QGRTMRW. The segment at 289 to 400 is VCR 1; it reads FYDDVTVPSP…QLREVPRAPE (112 aa). The residue at position 329 (serine 329) is a Phosphoserine. A compositionally biased stretch (basic and acidic residues) spans 402-413; the sequence is VIQALEEKKPTP. A disordered region spans residues 402-498; sequence VIQALEEKKP…DQEASEQFGS (97 aa). Over residues 458–467 the composition is skewed to acidic residues; it reads ENPEPTEDER. Threonine 463 carries the phosphothreonine modification. The span at 480–496 shows a compositional bias: polar residues; it reads CQGSSNGAQDQEASEQF. A VCR 2 region spans residues 514–562; sequence YLFKCLINVKKEVDDALVEMHWVEGQNRDLMNQLCTYIRNQIFRLVAVN.

The protein belongs to the methyltransferase superfamily. METTL16/RlmF family. Interacts with MEPCE. Interacts with LARP7.

The protein resides in the nucleus. It localises to the cytoplasm. The catalysed reaction is adenosine in U6 snRNA + S-adenosyl-L-methionine = N(6)-methyladenosine in U6 snRNA + S-adenosyl-L-homocysteine + H(+). The enzyme catalyses an adenosine in mRNA + S-adenosyl-L-methionine = an N(6)-methyladenosine in mRNA + S-adenosyl-L-homocysteine + H(+). Methyltransferase activity is autoinhibited by the K-loop region that blocks S-adenosyl-L-methionine-binding. Upon activation, K-loop changes conformation, allowing S-adenosyl-L-methionine-binding and subsequent methyltransferase activity. mRNA N6-adenosine-methyltransferase activity is inhibited by zinc. In terms of biological role, RNA N6-methyltransferase that methylates adenosine residues at the N(6) position of a subset of RNAs and is involved in S-adenosyl-L-methionine homeostasis by regulating expression of MAT2A transcripts. Able to N6-methylate a subset of mRNAs and U6 small nuclear RNAs (U6 snRNAs). In contrast to the METTL3-METTL14 heterodimer, only able to methylate a limited number of RNAs: requires both a 5'UACAGAGAA-3' nonamer sequence and a specific RNA structure. Plays a key role in S-adenosyl-L-methionine homeostasis by mediating N6-methylation of MAT2A mRNAs, altering splicing of MAT2A transcripts: in presence of S-adenosyl-L-methionine, binds the 3'-UTR region of MAT2A mRNA and specifically N6-methylates the first hairpin of MAT2A mRNA, preventing recognition of their 3'-splice site by U2AF1/U2AF35, thereby inhibiting splicing and protein production of S-adenosylmethionine synthase. In S-adenosyl-L-methionine-limiting conditions, binds the 3'-UTR region of MAT2A mRNA but stalls due to the lack of a methyl donor, preventing N6-methylation and promoting expression of MAT2A. In addition to mRNAs, also able to mediate N6-methylation of U6 small nuclear RNA (U6 snRNA): specifically N6-methylates adenine in position 43 of U6 snRNAs. Also able to bind various lncRNAs, such as 7SK snRNA (7SK RNA) or 7SL RNA. Specifically binds the 3'-end of the MALAT1 long non-coding RNA. The chain is RNA N(6)-adenosine-methyltransferase METTL16 from Homo sapiens (Human).